The primary structure comprises 350 residues: Serine-threonine kinase receptor-associated protein (350 aa).

WD repeat units lie at residues 12 to 56, 57 to 96, 98 to 137, 141 to 179, 180 to 212, 221 to 262, and 263 to 302; these read GHTR…GTFL, GHKG…ELMT, AHKH…AEPK, GHTS…EVKS, LNFN…HSAV, EAPA…ESYK, and GHFG…TYGL. Residues serine 312, serine 335, and serine 338 each carry the phosphoserine modification.

It belongs to the WD repeat STRAP family. As to quaternary structure, part of the core SMN complex that contains SMN1, GEMIN2/SIP1, DDX20/GEMIN3, GEMIN4, GEMIN5, GEMIN6, GEMIN7, GEMIN8 and STRAP/UNRIP. Part of the SMN-Sm complex that contains SMN1, GEMIN2/SIP1, DDX20/GEMIN3, GEMIN4, GEMIN5, GEMIN6, GEMIN7, GEMIN8, STRAP/UNRIP and the Sm proteins SNRPB, SNRPD1, SNRPD2, SNRPD3, SNRPE, SNRPF and SNRPG. Associates with the SMN complex in the cytoplasm but not in the nucleus. Interacts with GEMIN6; the interaction is direct. Interacts with GEMIN7; the interaction is direct. Interacts with CSDE1/UNR and MAWBP. Interacts with PDPK1. Interacts with TRIM48.

It localises to the cytoplasm. The protein resides in the nucleus. In terms of biological role, the SMN complex catalyzes the assembly of small nuclear ribonucleoproteins (snRNPs), the building blocks of the spliceosome, and thereby plays an important role in the splicing of cellular pre-mRNAs. Most spliceosomal snRNPs contain a common set of Sm proteins SNRPB, SNRPD1, SNRPD2, SNRPD3, SNRPE, SNRPF and SNRPG that assemble in a heptameric protein ring on the Sm site of the small nuclear RNA to form the core snRNP (Sm core). In the cytosol, the Sm proteins SNRPD1, SNRPD2, SNRPE, SNRPF and SNRPG are trapped in an inactive 6S pICln-Sm complex by the chaperone CLNS1A that controls the assembly of the core snRNP. To assemble core snRNPs, the SMN complex accepts the trapped 5Sm proteins from CLNS1A forming an intermediate. Binding of snRNA inside 5Sm triggers eviction of the SMN complex, thereby allowing binding of SNRPD3 and SNRPB to complete assembly of the core snRNP. STRAP plays a role in the cellular distribution of the SMN complex. Negatively regulates TGF-beta signaling but positively regulates the PDPK1 kinase activity by enhancing its autophosphorylation and by significantly reducing the association of PDPK1 with 14-3-3 protein. In Homo sapiens (Human), this protein is Serine-threonine kinase receptor-associated protein (STRAP).